The sequence spans 334 residues: Serine/Arginine-related protein 53 (334 aa).

The segment covering 1-13 (MGRRSSDTEEESR) has biased composition (basic and acidic residues). Disordered stretches follow at residues 1 to 173 (MGRR…IKAG), 201 to 222 (LKAK…QATL), and 241 to 290 (VQQT…SIPT). Positions 14-24 (SKRKKKHRRRS) are enriched in basic residues. The span at 44 to 62 (PRSESRSWSRDRQPRSHSY) shows a compositional bias: basic and acidic residues. Positions 78–118 (SRRKRSRSRSRGRGKSYRVQRSRSKSRTRRSRSRPRPRSHS) are enriched in basic residues. 3 stretches are compositionally biased toward basic and acidic residues: residues 132–166 (RSRD…KRGD), 201–218 (LKAK…KEED), and 247–262 (SSKD…EVKH). The stretch at 180 to 234 (AEQAKARLQLVLEAAAKADEALKAKERNEEEAKRRKEEDQATLGEQVKRVKEIEA) forms a coiled coil.

Interacts (via Arg/Ser-rich domain) with LUC7L3, RBM39 and RSF1. In terms of processing, phosphorylated.

Its subcellular location is the nucleus speckle. The protein localises to the nucleus. The protein resides in the cytoplasm. Functionally, plays a role in pre-mRNA splicing. Involved in both constitutive and alternative pre-mRNA splicing. May have a role in the recognition of the 3' splice site during the second step of splicing. The chain is Serine/Arginine-related protein 53 (Rsrc1) from Rattus norvegicus (Rat).